Consider the following 211-residue polypeptide: Ribosomal RNA small subunit methyltransferase G (211 aa).

Residues G73, 125–126 (IE), and R141 contribute to the S-adenosyl-L-methionine site.

This sequence belongs to the methyltransferase superfamily. RNA methyltransferase RsmG family.

It localises to the cytoplasm. The catalysed reaction is guanosine(527) in 16S rRNA + S-adenosyl-L-methionine = N(7)-methylguanosine(527) in 16S rRNA + S-adenosyl-L-homocysteine. Specifically methylates the N7 position of guanine in position 527 of 16S rRNA. This Methylobacterium radiotolerans (strain ATCC 27329 / DSM 1819 / JCM 2831 / NBRC 15690 / NCIMB 10815 / 0-1) protein is Ribosomal RNA small subunit methyltransferase G.